Here is a 593-residue protein sequence, read N- to C-terminus: Myc box-dependent-interacting protein 1 (593 aa).

Ala2 is modified (N-acetylalanine). Residues 2–122 (AEMGSKGVTA…DYHQKLVDQA (121 aa)) are interaction with BIN2. Coiled-coil stretches lie at residues 15–42 (ASNV…TKDE) and 193–267 (HLVA…NDVL). One can recognise a BAR domain in the interval 29 to 276 (VLQKLGKADE…LVGLEKQHGS (248 aa)). Disordered stretches follow at residues 280–354 (TVKA…KEVK) and 400–488 (PVTS…AASS). Ser296, Ser298, and Ser303 each carry phosphoserine. Residues Thr307 and Thr323 each carry the phosphothreonine modification. Ser331 is modified (phosphoserine). The clathrin-binding stretch occupies residues 378–421 (FEAPGPFSEQASLLDLDFDPLPPVTSPVKAPTPSGQSIPWDLWE). The region spanning 520–593 (GFMFKVQAQH…FPENFTERVP (74 aa)) is the SH3 domain.

In terms of assembly, heterodimer with AMPH. Binds SH3GLB1. Interacts (via SH3 domain) with DNM1. Interacts with SYNJ1. Interacts (via SH3 domain) with DNM2. Isoform IIA interacts with CLTC. Isoform IIB does not interact with CLTC. Isoform IIC1 does not interact with CLTC. Isoform IIC2 does not interact with CLTC. Interacts with AP2A2. Interacts with AP2B1. Interacts with MYC (via N-terminal transactivation domain); the interaction requires the integrity of the conserved MYC box regions 1 and 2. Interacts with BIN2. Interacts with SNX4. Interacts (via BAR domain) with BACE1. Binds (via BAR domain) F-actin. (Microbial infection) Interacts (SH3 domain) with HCV NS5A. Phosphorylated by protein kinase C. Ubiquitous. Highest expression in the brain and muscle. Expressed in oligodendrocytes. Isoform IIA is expressed only in the brain, where it is detected in the gray matter, but not in the white matter. Isoform BIN1 is widely expressed with highest expression in skeletal muscle.

It is found in the nucleus. Its subcellular location is the cytoplasm. The protein resides in the endosome. The protein localises to the cell membrane. It localises to the sarcolemma. It is found in the T-tubule. In terms of biological role, is a key player in the control of plasma membrane curvature, membrane shaping and membrane remodeling. Required in muscle cells for the formation of T-tubules, tubular invaginations of the plasma membrane that function in depolarization-contraction coupling. Is a negative regulator of endocytosis. Is also involved in the regulation of intracellular vesicles sorting, modulation of BACE1 trafficking and the control of amyloid-beta production. In neuronal circuits, endocytosis regulation may influence the internalization of PHF-tau aggregates. May be involved in the regulation of MYC activity and the control cell proliferation. Has actin bundling activity and stabilizes actin filaments against depolymerization in vitro. This chain is Myc box-dependent-interacting protein 1 (BIN1), found in Homo sapiens (Human).